A 331-amino-acid chain; its full sequence is 3'-5' exonuclease (331 aa).

The tract at residues 27 to 92 (ERVKQTNAAK…EDGPASPEKE (66 aa)) is disordered. A compositionally biased stretch (polar residues) spans 31–43 (QTNAAKKQIATNN). Over residues 47-67 (KNQDTPEMIKDKENAESENPP) the composition is skewed to basic and acidic residues. Serine 80 and serine 88 each carry phosphoserine. Positions 118–290 (SADEVMQWVE…IGQVIYREIE (173 aa)) constitute a 3'-5' exonuclease domain. 3 residues coordinate Mg(2+): aspartate 140, glutamate 142, and aspartate 278.

Belongs to the WRNexo family.

It localises to the nucleus. Its function is as follows. Has exonuclease activity on both single-stranded and duplex templates bearing overhangs, but not blunt ended duplex DNA, and cleaves in a 3'-5' direction. Essential for the formation of DNA replication focal centers. Has an important role in maintaining genome stability. The chain is 3'-5' exonuclease from Drosophila grimshawi (Hawaiian fruit fly).